Consider the following 604-residue polypeptide: MTMRAARLSGSTGLTAALVAVLLVLTGCASLPESSAPQALGTIDREPTSEGPTPPIAGRDPDLLLRDFLQATADPTNRHLAARQYMTPAASAQWDDSTSTTIVEKPDTLLESRDGDRATYRIRAQRMAELSADGAYRAVNEPTLENKIEMVKVDGEWRIAELPDGVVMDITAFTKSYRRYVLYFADPSGNTAVPDLRWLSVPKNQLTQRLLSLLSEGPHGAIGAVVRNQLAAPVALRGPITKANGDPDDVGVGLGGVRLDFAGAAALSQRDKELLAGQVVLTLAQADIPGPYMLLADGRPLDERYATNGWSAADVEYLSPSVQAQNRIGLHALRDGALTQVTDNGVVETPGYFGSVNNLQSAALSPDGQLVAAVADAGRPAPEPPRTLMVGTYGGPAFPVAEGGSITRPSWTGDGSAAWAVIDGDRVIRAVNDRATGTVSVQGVDISGLTADPAGPALRLPITELRISRTGVRAALIADGKVYVAVVERRPDGGYALTAPVPVAVGLSTKATSLSWIGGDTLLIAREGNIDPVSTVLIDGSEWTPVTSQNLTPPVRVITAAPGAQYVADSRGVLELTSNTTSELHYWTEMPGLVGTDAAPVLPG.

An N-terminal signal peptide occupies residues 1-27; it reads MTMRAARLSGSTGLTAALVAVLLVLTG. A lipid anchor (N-palmitoyl cysteine) is attached at C28. C28 carries the S-diacylglycerol cysteine lipid modification. The segment at 35–60 is disordered; that stretch reads SAPQALGTIDREPTSEGPTPPIAGRD.

This sequence belongs to the LpqB lipoprotein family.

The protein localises to the cell membrane. This Nocardia farcinica (strain IFM 10152) protein is Lipoprotein LpqB.